A 392-amino-acid chain; its full sequence is NADH-quinone oxidoreductase subunit D 1 (392 aa).

Belongs to the complex I 49 kDa subunit family. In terms of assembly, NDH-1 is composed of 14 different subunits. Subunits NuoB, C, D, E, F, and G constitute the peripheral sector of the complex.

It localises to the cell inner membrane. It carries out the reaction a quinone + NADH + 5 H(+)(in) = a quinol + NAD(+) + 4 H(+)(out). NDH-1 shuttles electrons from NADH, via FMN and iron-sulfur (Fe-S) centers, to quinones in the respiratory chain. The immediate electron acceptor for the enzyme in this species is believed to be a menaquinone. Couples the redox reaction to proton translocation (for every two electrons transferred, four hydrogen ions are translocated across the cytoplasmic membrane), and thus conserves the redox energy in a proton gradient. The protein is NADH-quinone oxidoreductase subunit D 1 of Cytophaga hutchinsonii (strain ATCC 33406 / DSM 1761 / CIP 103989 / NBRC 15051 / NCIMB 9469 / D465).